A 319-amino-acid chain; its full sequence is Serpentine receptor class X-43 (319 aa).

7 consecutive transmembrane segments (helical) span residues 28–48, 67–87, 95–115, 138–158, 164–184, 194–214, and 267–287; these read VVSM…IGCF, AQLM…LLNI, YLFG…FLLM, IRTF…YLVV, FVFY…CGTL, TVLS…LMAF, and FFFT…VVVF.

This sequence belongs to the G-protein coupled receptor 1 family. Expressed in ASI sensory neurons.

The protein resides in the cell membrane. It is found in the perikaryon. It localises to the cell projection. Its subcellular location is the cilium. In terms of biological role, receptor for the ascaroside pheromone icas#9 which suppresses exploratory forgaging behavior. In response to ascaroside icas#9, may furthermore play a role in the expression of genes in the TGF-beta signaling pathway, such as daf-7, and in insulin signaling pathway, such as daf-28, which may in turn contribute to exploratory behavior. This Caenorhabditis elegans protein is Serpentine receptor class X-43.